Reading from the N-terminus, the 452-residue chain is Putrescine hydroxycinnamoyltransferase (452 aa).

The Proton acceptor role is filled by H151. The tract at residues 213–234 (PAAGVDGDVGGDHKQQHGHGGE) is disordered. The segment covering 222 to 234 (GGDHKQQHGHGGE) has biased composition (basic and acidic residues). Residue D398 is the Proton acceptor of the active site.

The protein belongs to the plant acyltransferase family. As to expression, highly expressed in roots. Expressed at low levels in flowers.

Hydroxycinnamoyl transferase that catalyzes the transfer of an acyl from p-coumaryol-CoA to putrescine, to produce coumaroyl putrescine. Can use feruloyl-CoA, caffeoyl-CoA and sinapoyl-CoA as acyl donors. Seems to be able to transfer the acyl group from feruloyl-CoA to the acyl acceptors agmatine and spermidine. This is Putrescine hydroxycinnamoyltransferase from Oryza sativa subsp. japonica (Rice).